Here is a 155-residue protein sequence, read N- to C-terminus: 3-dehydroquinate dehydratase (155 aa).

Residue Tyr-31 is the Proton acceptor of the active site. Substrate contacts are provided by Asn-83, His-89, and Asp-96. His-109 (proton donor) is an active-site residue. Substrate is bound by residues 110–111 and Arg-120; that span reads LS.

This sequence belongs to the type-II 3-dehydroquinase family. In terms of assembly, homododecamer.

The enzyme catalyses 3-dehydroquinate = 3-dehydroshikimate + H2O. It functions in the pathway metabolic intermediate biosynthesis; chorismate biosynthesis; chorismate from D-erythrose 4-phosphate and phosphoenolpyruvate: step 3/7. In terms of biological role, catalyzes a trans-dehydration via an enolate intermediate. The polypeptide is 3-dehydroquinate dehydratase (Laribacter hongkongensis (strain HLHK9)).